The primary structure comprises 217 residues: UPF0502 protein ETA_20480 (217 aa).

The disordered stretch occupies residues 169 to 188; the sequence is GEVDESSRADGHHPDDHRGD. Basic and acidic residues predominate over residues 173–188; that stretch reads ESSRADGHHPDDHRGD.

It belongs to the UPF0502 family.

This chain is UPF0502 protein ETA_20480, found in Erwinia tasmaniensis (strain DSM 17950 / CFBP 7177 / CIP 109463 / NCPPB 4357 / Et1/99).